Reading from the N-terminus, the 211-residue chain is Redox-sensing transcriptional repressor Rex (211 aa).

The H-T-H motif DNA-binding region spans 17–56; the sequence is KYHRYLEELLRNEVDRISSKELSKKIGFTASQIRQDFNCF. NAD(+) is bound at residue 91 to 96; it reads GGGNIG.

Belongs to the transcriptional regulatory Rex family. As to quaternary structure, homodimer.

It is found in the cytoplasm. In terms of biological role, modulates transcription in response to changes in cellular NADH/NAD(+) redox state. The chain is Redox-sensing transcriptional repressor Rex from Clostridium tetani (strain Massachusetts / E88).